A 212-amino-acid chain; its full sequence is Imidazole glycerol phosphate synthase subunit HisH (212 aa).

One can recognise a Glutamine amidotransferase type-1 domain in the interval 3–208 (RIVIVDYGMG…GRMVCDLIST (206 aa)). The active-site Nucleophile is the Cys-81. Active-site residues include His-183 and Glu-185.

Heterodimer of HisH and HisF.

It localises to the cytoplasm. It carries out the reaction 5-[(5-phospho-1-deoxy-D-ribulos-1-ylimino)methylamino]-1-(5-phospho-beta-D-ribosyl)imidazole-4-carboxamide + L-glutamine = D-erythro-1-(imidazol-4-yl)glycerol 3-phosphate + 5-amino-1-(5-phospho-beta-D-ribosyl)imidazole-4-carboxamide + L-glutamate + H(+). It catalyses the reaction L-glutamine + H2O = L-glutamate + NH4(+). It functions in the pathway amino-acid biosynthesis; L-histidine biosynthesis; L-histidine from 5-phospho-alpha-D-ribose 1-diphosphate: step 5/9. Its function is as follows. IGPS catalyzes the conversion of PRFAR and glutamine to IGP, AICAR and glutamate. The HisH subunit catalyzes the hydrolysis of glutamine to glutamate and ammonia as part of the synthesis of IGP and AICAR. The resulting ammonia molecule is channeled to the active site of HisF. The sequence is that of Imidazole glycerol phosphate synthase subunit HisH from Symbiobacterium thermophilum (strain DSM 24528 / JCM 14929 / IAM 14863 / T).